We begin with the raw amino-acid sequence, 329 residues long: Ferredoxin--NADP reductase 2 (329 aa).

FAD-binding residues include threonine 18, glutamate 37, glutamine 45, tyrosine 50, valine 90, phenylalanine 124, aspartate 285, and serine 326.

The protein belongs to the ferredoxin--NADP reductase type 2 family. As to quaternary structure, homodimer. FAD is required as a cofactor.

It carries out the reaction 2 reduced [2Fe-2S]-[ferredoxin] + NADP(+) + H(+) = 2 oxidized [2Fe-2S]-[ferredoxin] + NADPH. The polypeptide is Ferredoxin--NADP reductase 2 (Bacillus cytotoxicus (strain DSM 22905 / CIP 110041 / 391-98 / NVH 391-98)).